Reading from the N-terminus, the 348-residue chain is D-alanine--D-alanine ligase (348 aa).

Residues 132-334 (KRVLESIGIP…YPDLIEELVT (203 aa)) form the ATP-grasp domain. Position 162–217 (162–217 (LARLTFPIFVKPANMGSSVGISKAQTKVELRKAIQLALTYDSRVLIEQGVVAREIE)) interacts with ATP. Residues D288, E301, and N303 each contribute to the Mg(2+) site.

Belongs to the D-alanine--D-alanine ligase family. Mg(2+) is required as a cofactor. Mn(2+) serves as cofactor.

The protein resides in the cytoplasm. The enzyme catalyses 2 D-alanine + ATP = D-alanyl-D-alanine + ADP + phosphate + H(+). It participates in cell wall biogenesis; peptidoglycan biosynthesis. Cell wall formation. This chain is D-alanine--D-alanine ligase, found in Streptococcus pyogenes serotype M12 (strain MGAS2096).